The sequence spans 211 residues: FMN-dependent NADH:quinone oxidoreductase (211 aa).

Residues S10 and 16-18 each bind FMN; that span reads STS.

It belongs to the azoreductase type 1 family. Homodimer. It depends on FMN as a cofactor.

The enzyme catalyses 2 a quinone + NADH + H(+) = 2 a 1,4-benzosemiquinone + NAD(+). The catalysed reaction is N,N-dimethyl-1,4-phenylenediamine + anthranilate + 2 NAD(+) = 2-(4-dimethylaminophenyl)diazenylbenzoate + 2 NADH + 2 H(+). Quinone reductase that provides resistance to thiol-specific stress caused by electrophilic quinones. In terms of biological role, also exhibits azoreductase activity. Catalyzes the reductive cleavage of the azo bond in aromatic azo compounds to the corresponding amines. This Frankia casuarinae (strain DSM 45818 / CECT 9043 / HFP020203 / CcI3) protein is FMN-dependent NADH:quinone oxidoreductase.